Reading from the N-terminus, the 111-residue chain is uncharacterized protein (111 aa).

Residues 81-101 traverse the membrane as a helical segment; that stretch reads YFFLLFYVSFPHIFLGLFFFI.

Its subcellular location is the membrane. This is an uncharacterized protein from Schizosaccharomyces pombe (strain 972 / ATCC 24843) (Fission yeast).